Here is a 689-residue protein sequence, read N- to C-terminus: Glycine--tRNA ligase beta subunit (689 aa).

It belongs to the class-II aminoacyl-tRNA synthetase family. As to quaternary structure, tetramer of two alpha and two beta subunits.

The protein resides in the cytoplasm. The catalysed reaction is tRNA(Gly) + glycine + ATP = glycyl-tRNA(Gly) + AMP + diphosphate. This Salmonella arizonae (strain ATCC BAA-731 / CDC346-86 / RSK2980) protein is Glycine--tRNA ligase beta subunit.